Reading from the N-terminus, the 217-residue chain is Large ribosomal subunit protein uL1 (217 aa).

Serine 2 carries the N-acetylserine modification. Tyrosine 11 carries the post-translational modification Phosphotyrosine. Residues lysine 91 and lysine 106 each carry the N6-acetyllysine modification. An N6-acetyllysine; alternate modification is found at lysine 118. Residue lysine 118 forms a Glycyl lysine isopeptide (Lys-Gly) (interchain with G-Cter in SUMO1); alternate linkage. Lysine 118 participates in a covalent cross-link: Glycyl lysine isopeptide (Lys-Gly) (interchain with G-Cter in SUMO2); alternate. Lysine 161 participates in a covalent cross-link: Glycyl lysine isopeptide (Lys-Gly) (interchain with G-Cter in SUMO2).

It belongs to the universal ribosomal protein uL1 family. In terms of assembly, component of the large ribosomal subunit.

It localises to the cytoplasm. In terms of biological role, component of the large ribosomal subunit. The ribosome is a large ribonucleoprotein complex responsible for the synthesis of proteins in the cell. The sequence is that of Large ribosomal subunit protein uL1 (RPL10A) from Bos taurus (Bovine).